The following is a 192-amino-acid chain: Fe/S biogenesis protein NfuA (192 aa).

[4Fe-4S] cluster-binding residues include C150 and C153.

This sequence belongs to the NfuA family. Homodimer. [4Fe-4S] cluster is required as a cofactor.

In terms of biological role, involved in iron-sulfur cluster biogenesis. Binds a 4Fe-4S cluster, can transfer this cluster to apoproteins, and thereby intervenes in the maturation of Fe/S proteins. Could also act as a scaffold/chaperone for damaged Fe/S proteins. In Ruthia magnifica subsp. Calyptogena magnifica, this protein is Fe/S biogenesis protein NfuA.